The chain runs to 428 residues: GTPase Obg (428 aa).

Residues 1–158 (MFIDQVKIYV…RDVILELKVL (158 aa)) form the Obg domain. In terms of domain architecture, OBG-type G spans 159-329 (ADVGLVGFPS…LLFEVANLIE (171 aa)). Residues 165–172 (GFPSVGKS), 190–194 (FTTIV), 212–215 (DLPG), 282–285 (NKMD), and 310–312 (SAV) each bind GTP. Residues S172 and T192 each contribute to the Mg(2+) site. The region spanning 350–428 (KFETEGVKFD…ILEYEFEFID (79 aa)) is the OCT domain.

The protein belongs to the TRAFAC class OBG-HflX-like GTPase superfamily. OBG GTPase family. As to quaternary structure, monomer. Mg(2+) is required as a cofactor.

The protein resides in the cytoplasm. An essential GTPase which binds GTP, GDP and possibly (p)ppGpp with moderate affinity, with high nucleotide exchange rates and a fairly low GTP hydrolysis rate. Plays a role in control of the cell cycle, stress response, ribosome biogenesis and in those bacteria that undergo differentiation, in morphogenesis control. This is GTPase Obg from Bacillus anthracis.